A 281-amino-acid polypeptide reads, in one-letter code: Penicillin-insensitive murein endopeptidase (281 aa).

An N-terminal signal peptide occupies residues 1–24 (MKQGLIGVLALALGATLLSSAVWA). 3 disulfides stabilise this stretch: Cys-49/Cys-270, Cys-192/Cys-240, and Cys-221/Cys-228. Positions 115, 118, 125, and 216 each coordinate Zn(2+). Residues 230-271 (EQSEPPIGDGCGAELTSWFQPKQPSSEAPEKTTPPPLPPSCQ) form a disordered region. Over residues 246–255 (SWFQPKQPSS) the composition is skewed to polar residues.

It belongs to the peptidase M74 family. In terms of assembly, dimer. It depends on Zn(2+) as a cofactor.

The protein resides in the periplasm. Functionally, murein endopeptidase that cleaves the D-alanyl-meso-2,6-diamino-pimelyl amide bond that connects peptidoglycan strands. Likely plays a role in the removal of murein from the sacculus. This Pectobacterium atrosepticum (strain SCRI 1043 / ATCC BAA-672) (Erwinia carotovora subsp. atroseptica) protein is Penicillin-insensitive murein endopeptidase (mepA).